The sequence spans 233 residues: Antiholin-like protein LrgB (233 aa).

Helical transmembrane passes span 7 to 27 (INTP…ATFL), 33 to 53 (GFFL…FLKL), 63 to 83 (IGGD…AIPL), 97 to 117 (ILGG…LIAE), 124 to 144 (GIIA…PVSA), 152 to 172 (LTSL…SKLI), and 212 to 232 (ISLV…ATLL).

Belongs to the CidB/LrgB family. LrgB subfamily.

The protein resides in the cell membrane. In terms of biological role, inhibits the expression or activity of extracellular murein hydrolases by interacting, possibly with LrgA, with the holin-like proteins CidA and/or CidB. The LrgAB and CidAB proteins may affect the proton motive force of the membrane. May be involved in programmed cell death (PCD), possibly triggering PCD in response to antibiotics and environmental stresses. This chain is Antiholin-like protein LrgB, found in Staphylococcus saprophyticus subsp. saprophyticus (strain ATCC 15305 / DSM 20229 / NCIMB 8711 / NCTC 7292 / S-41).